The sequence spans 553 residues: Putative ABC transporter ATP-binding protein BCE_3323 (553 aa).

ABC transporter domains lie at 7 to 245 (AEIN…FRPF) and 295 to 527 (LSAE…SINR). Residues 41–48 (GGSGSGKT) and 329–336 (GKNGTGKS) each bind ATP.

Belongs to the ABC transporter superfamily.

It is found in the cell membrane. Probably part of an ABC transporter complex. Responsible for energy coupling to the transport system. The protein is Putative ABC transporter ATP-binding protein BCE_3323 of Bacillus cereus (strain ATCC 10987 / NRS 248).